The following is a 250-amino-acid chain: MADDLGLDLGKKKKSKKVIKIDGDDAPVETGVEAVEDGLGELNLGAKKKKKTPKTAGEEVVEEKVPTLEIGIGAQNLIDAKGAWPDYTYEEALTLVYQVMKDKNPDFAGDKKKFAIKLPEVARAGSKKTAFSNFLEICRLMKRQDKHVLQFLLAELGTTGSIDGSNCLIVKGRWQQKQFESVLRKYIKEYVMCHTCKSPETQLTKDTRLFFLQCTNCGSRCSVTAIKSGFKAVVGKRAAIRRAEEATAGK.

The segment at cysteine 193–cysteine 217 adopts a C4-type zinc-finger fold.

The protein belongs to the eIF-2-beta/eIF-5 family. Eukaryotic translation initiation factor 2 eIF2 is a heterotrimeric complex composed of an alpha, a beta and a gamma subunit.

The protein resides in the cytoplasm. Its subcellular location is the cytosol. In terms of biological role, component of the eIF2 complex that functions in the early steps of protein synthesis by forming a ternary complex with GTP and initiator tRNA. This complex binds to a 40S ribosomal subunit, followed by mRNA binding to form a 43S pre-initiation complex (43S PIC). Junction of the 60S ribosomal subunit to form the 80S initiation complex is preceded by hydrolysis of the GTP bound to eIF2 and release of an eIF2-GDP binary complex. In order for eIF2 to recycle and catalyze another round of initiation, the GDP bound to eIF2 must exchange with GTP by way of a reaction catalyzed by eIF2B. The chain is Eukaryotic translation initiation factor 2 subunit 2 from Caenorhabditis elegans.